Reading from the N-terminus, the 472-residue chain is Aspartyl/glutamyl-tRNA(Asn/Gln) amidotransferase subunit B (472 aa).

Belongs to the GatB/GatE family. GatB subfamily. As to quaternary structure, heterotrimer of A, B and C subunits.

It carries out the reaction L-glutamyl-tRNA(Gln) + L-glutamine + ATP + H2O = L-glutaminyl-tRNA(Gln) + L-glutamate + ADP + phosphate + H(+). The catalysed reaction is L-aspartyl-tRNA(Asn) + L-glutamine + ATP + H2O = L-asparaginyl-tRNA(Asn) + L-glutamate + ADP + phosphate + 2 H(+). Allows the formation of correctly charged Asn-tRNA(Asn) or Gln-tRNA(Gln) through the transamidation of misacylated Asp-tRNA(Asn) or Glu-tRNA(Gln) in organisms which lack either or both of asparaginyl-tRNA or glutaminyl-tRNA synthetases. The reaction takes place in the presence of glutamine and ATP through an activated phospho-Asp-tRNA(Asn) or phospho-Glu-tRNA(Gln). The chain is Aspartyl/glutamyl-tRNA(Asn/Gln) amidotransferase subunit B from Campylobacter jejuni (strain RM1221).